The primary structure comprises 434 residues: Protein phosphatase 2C 56 (434 aa).

The 295-residue stretch at 128-422 folds into the PPM-type phosphatase domain; the sequence is LYGFTSICGR…DNISVVVVDL (295 aa). D177, D261, S262, D347, and D413 together coordinate Mg(2+). Positions 423-427 match the Nuclear localization signal motif; sequence KPRRK.

It belongs to the PP2C family. As to quaternary structure, interacts with SPK1, ATHB-6, CIPK15/PKS3, GPX3, SRK2E/OST1, SRK2D, SRK2I, SCAR1, SCAR2, SCAR3 and SCARL. Binds to the PA released by the phospholipase D alpha 1 (PLDALPHA1) in response to ABA during the stomatal closure regulation. Interacts with ABA-bounded PYR1, PYL1, PYL2, PYL3, PYL4, PYL5, PYL6, PYL7, PYL8, PYL9, PYL10, and with free PYL2, PYL3, PYL4 and PYL13. Binds to RPL12B, CPK21 and CPK23. Binds to MAPKKK18. Interacts with KIN10. Interacts with phosphorylated PYL8/RCAR3. Requires Mg(2+) as cofactor. The cofactor is Mn(2+). As to expression, expressed in seeds and seedlings. In roots, confined to lateral root caps and columella cells.

It localises to the nucleus. The protein resides in the cytoplasm. Its subcellular location is the cell membrane. The catalysed reaction is O-phospho-L-seryl-[protein] + H2O = L-seryl-[protein] + phosphate. It catalyses the reaction O-phospho-L-threonyl-[protein] + H2O = L-threonyl-[protein] + phosphate. Phosphatase activity repressed by oxidized GPX3 and phosphatidic acid (PA). PA is produced by PLD alpha 1 in response to ABA. Repressed by PYR/PYL/RCAR ABA receptors in an ABA-dependent manner. Its function is as follows. Key component and repressor of the abscisic acid (ABA) signaling pathway that regulates numerous ABA responses, such as stomatal closure, osmotic water permeability of the plasma membrane (Pos), drought-induced resistance and rhizogenesis, response to glucose, high light stress, seed germination and inhibition of vegetative growth. During the stomatal closure regulation, modulates the inward calcium-channel permeability as well as the actin reorganization in guard cells in response to ABA. Involved in the resistance to the bacterial pathogen Pseudomonas syringae pv. tomato. Controls negatively fibrillin expression that is involved in mediating ABA-induced photoprotection. May be involved in ABA content regulation. Plays a role in the Pro accumulation in response to reduced water availability (low water potential). Required for the ABA negative regulation of the ethylene-induced hyponastic growth. Involved in acquired thermotolerance of root growth and seedling survival. Activates/represses SRK2E/OST1 in response to ABA-dependent stimuli, especially in stomata closure regulation involving SLAC1. Represses MAPKKK18 activity and promotes MAPKKK18 degradation by the proteasome pathway upon abscisic acid (ABA) treatment. Represses KIN10 activity by the specific dephosphorylation of its T-loop Thr-198, leading to a poststress inactivation of SnRK1 signaling. Restricts MAPKKK20 activity by dephosphorylation. The chain is Protein phosphatase 2C 56 from Arabidopsis thaliana (Mouse-ear cress).